We begin with the raw amino-acid sequence, 262 residues long: Aminoglycoside (3'') (9) adenylyltransferase (262 aa).

It catalyses the reaction streptomycin + ATP = 3''-O-adenylylstreptomycin + diphosphate. The catalysed reaction is spectinomycin + ATP = 9-O-adenylylspectinomycin + diphosphate. In terms of biological role, mediates bacterial resistance to the antibiotics streptomycin and spectinomycin. The protein is Aminoglycoside (3'') (9) adenylyltransferase of Shigella flexneri.